We begin with the raw amino-acid sequence, 2259 residues long: Putative Polycomb group protein ASXL3 (2259 aa).

Positions 10–83 constitute an HTH HARE-type domain; it reads RTWAEAARLA…KSGLYALRKE (74 aa). The tract at residues 181–230 is disordered; that stretch reads VVLTPLKVSDEQSDSPSGSESKNGEADSSDKEMKHGQKSPTGKQTSQHLK. Basic and acidic residues predominate over residues 202–215; it reads KNGEADSSDKEMKH. Positions 218–227 are enriched in polar residues; sequence KSPTGKQTSQ. Positions 253 to 362 constitute a DEUBAD domain; the sequence is PGSILVNTNL…FERFYGERSG (110 aa). Disordered regions lie at residues 364-399, 607-643, 703-810, 857-1012, 1025-1049, 1126-1150, 1433-1462, 1614-1643, 1687-1719, and 1993-2075; these read SREE…AQNA, CISE…CTPA, EASP…IPEP, SEMT…PLKI, SQPV…NTGA, RLPS…TKME, LSGE…GGFV, DPMR…GLKA, DFPG…TTSP, and NMLS…TTKR. Polar residues-rich tracts occupy residues 607–617, 630–643, and 703–717; these read CISETSFSSES, GETQ…CTPA, and EASP…SEAS. Over residues 722–741 the composition is skewed to low complexity; sequence LPPTSETSSESSMPLTSETP. 2 stretches are compositionally biased toward polar residues: residues 770–781 and 926–945; these read KSPSGSEEANSP and QSST…SEPS. 2 stretches are compositionally biased toward basic and acidic residues: residues 949 to 985 and 995 to 1006; these read DGIR…DDQS and PEKEQPPREEPR. A compositionally biased stretch (low complexity) spans 1034–1043; sequence RASTSTSVSS. Polar residues predominate over residues 1437 to 1448; the sequence is NLDNNSGPLNRT. Residues 1699 to 1719 show a composition bias toward polar residues; sequence EVTSSASVQPTQTMKPSTTSP. Over residues 2023-2055 the composition is skewed to pro residues; that stretch reads PLPPPPPPPPPPPPPLALPPPPPPPPPLPPPLP. A PHD-type; atypical zinc finger spans residues 2221–2258; that stretch reads ELKCSCRLKAMIVCKGCGAFCHDDCIGPSKLCVACLVV.

The protein belongs to the Asx family. Core component of the polycomb repressive deubiquitinase (PR-DUB) complex, at least composed of BAP1, one of ASXL1, ASXL2 or (probably) ASXL3, and one of MBD5 or MBD6. Distinct combinations of ASXL and MBD proteins may preferentially bind specific histone modification marks. The PR-DUB core associates with a number of accessory proteins, including FOXK1, FOXK2, KDM1B, HCFC1 and OGT; KDM1B specifically associates with ASXL2 PR-DUB complexes. Interacts (via PHD domain) with MBD5 and MBD6 (via MBD domain); the interaction is probably direct and mediates association of MBD proteins with the PR-DUB core.

It localises to the nucleus. Functionally, putative Polycomb group (PcG) protein. PcG proteins act by forming multiprotein complexes, which are required to maintain the transcriptionally repressive state of homeotic genes throughout development. PcG proteins are not required to initiate repression, but to maintain it during later stages of development. They probably act via methylation of histones, rendering chromatin heritably changed in its expressibility. Non-catalytic component of the PR-DUB complex, a complex that specifically mediates deubiquitination of histone H2A monoubiquitinated at 'Lys-119' (H2AK119ub1). The PR-DUB complex is an epigenetic regulator of gene expression and acts as a transcriptional coactivator, affecting genes involved in development, cell communication, signaling, cell proliferation and cell viability. ASXL1, ASXL2 and ASXL3 function redundantly in the PR-DUB complex and are essential for chromatin recruitment and transcriptional activation of associated genes. The chain is Putative Polycomb group protein ASXL3 (Asxl3) from Mus musculus (Mouse).